A 492-amino-acid chain; its full sequence is Glutamyl-tRNA(Gln) amidotransferase subunit A (492 aa).

Residues Lys78 and Ser158 each act as charge relay system in the active site. The active-site Acyl-ester intermediate is Ser182.

It belongs to the amidase family. GatA subfamily. Heterotrimer of A, B and C subunits.

It catalyses the reaction L-glutamyl-tRNA(Gln) + L-glutamine + ATP + H2O = L-glutaminyl-tRNA(Gln) + L-glutamate + ADP + phosphate + H(+). Functionally, allows the formation of correctly charged Gln-tRNA(Gln) through the transamidation of misacylated Glu-tRNA(Gln) in organisms which lack glutaminyl-tRNA synthetase. The reaction takes place in the presence of glutamine and ATP through an activated gamma-phospho-Glu-tRNA(Gln). In Orientia tsutsugamushi (strain Ikeda) (Rickettsia tsutsugamushi), this protein is Glutamyl-tRNA(Gln) amidotransferase subunit A.